We begin with the raw amino-acid sequence, 532 residues long: Probable bifunctional tRNA threonylcarbamoyladenosine biosynthesis protein (532 aa).

The interval 1–323 is kae1; that stretch reads MRVLGVEGTA…FRPDEVSVTW (323 aa). 2 residues coordinate Fe cation: His-107 and His-111. L-threonylcarbamoyladenylate-binding positions include 128–132, Asp-160, Gly-173, Glu-177, and Asn-256; that span reads NASGA. Asp-284 provides a ligand contact to Fe cation. A Protein kinase domain is found at 329 to 532; sequence PARDPGADAV…GRYQDDPETA (204 aa). ATP contacts are provided by residues 338–346 and Lys-355; that span reads VRQGAEATV. Catalysis depends on Asp-444, which acts as the Proton acceptor; for kinase activity.

The protein in the N-terminal section; belongs to the KAE1 / TsaD family. In the C-terminal section; belongs to the protein kinase superfamily. Tyr protein kinase family. BUD32 subfamily. Component of the KEOPS complex that consists of Kae1, Bud32, Cgi121 and Pcc1; the whole complex dimerizes. Fe(2+) serves as cofactor.

The protein resides in the cytoplasm. It carries out the reaction L-seryl-[protein] + ATP = O-phospho-L-seryl-[protein] + ADP + H(+). The enzyme catalyses L-threonyl-[protein] + ATP = O-phospho-L-threonyl-[protein] + ADP + H(+). It catalyses the reaction L-threonylcarbamoyladenylate + adenosine(37) in tRNA = N(6)-L-threonylcarbamoyladenosine(37) in tRNA + AMP + H(+). In terms of biological role, required for the formation of a threonylcarbamoyl group on adenosine at position 37 (t(6)A37) in tRNAs that read codons beginning with adenine. Is a component of the KEOPS complex that is probably involved in the transfer of the threonylcarbamoyl moiety of threonylcarbamoyl-AMP (TC-AMP) to the N6 group of A37. The Kae1 domain likely plays a direct catalytic role in this reaction. The Bud32 domain probably displays kinase activity that regulates Kae1 function. The sequence is that of Probable bifunctional tRNA threonylcarbamoyladenosine biosynthesis protein from Halobacterium salinarum (strain ATCC 700922 / JCM 11081 / NRC-1) (Halobacterium halobium).